A 61-amino-acid polypeptide reads, in one-letter code: MARKALIIKQQRPQKFSTRYYNRCKICGRPRAYLRKFGVCRLCFRKLAHNGEIPGVKKASW.

Zn(2+) is bound by residues Cys24, Cys27, Cys40, and Cys43.

Belongs to the universal ribosomal protein uS14 family. Zinc-binding uS14 subfamily. As to quaternary structure, part of the 30S ribosomal subunit. Contacts proteins S3 and S10. Zn(2+) serves as cofactor.

In terms of biological role, binds 16S rRNA, required for the assembly of 30S particles and may also be responsible for determining the conformation of the 16S rRNA at the A site. This chain is Small ribosomal subunit protein uS14, found in Caldicellulosiruptor bescii (strain ATCC BAA-1888 / DSM 6725 / KCTC 15123 / Z-1320) (Anaerocellum thermophilum).